Consider the following 912-residue polypeptide: Metabotropic glutamate receptor 4 (912 aa).

The N-terminal stretch at 1 to 32 (MPGKSGLGWWWARLPLCLLLSLYGPWMPSSLG) is a signal peptide. Over 33–586 (KPKGHPHMNS…PIIKLEWDSP (554 aa)) the chain is Extracellular. Cysteine 67 and cysteine 109 are oxidised to a cystine. N-linked (GlcNAc...) asparagine glycosylation occurs at asparagine 98. L-glutamate-binding positions include serine 159, 180-182 (AST), and tyrosine 230. Cystine bridges form between cysteine 249–cysteine 538, cysteine 372–cysteine 388, cysteine 428–cysteine 435, cysteine 520–cysteine 539, cysteine 524–cysteine 542, cysteine 545–cysteine 557, and cysteine 560–cysteine 573. An N-linked (GlcNAc...) asparagine glycan is attached at asparagine 301. Aspartate 312 contributes to the L-glutamate binding site. Lysine 405 contributes to the L-glutamate binding site. N-linked (GlcNAc...) asparagine glycosylation is found at asparagine 454 and asparagine 484. Residue asparagine 569 is glycosylated (N-linked (GlcNAc...) asparagine). The helical transmembrane segment at 587-607 (WAVLPLFLAVVGIAATLFVVI) threads the bilayer. Residues 608 to 624 (TFVRYNDTPIVKASGRE) lie on the Cytoplasmic side of the membrane. A helical transmembrane segment spans residues 625–645 (LSYVLLAGIFLCYATTFLMIA). At 646-653 (EPDLGTCS) the chain is on the extracellular side. The chain crosses the membrane as a helical span at residues 654-671 (LRRIFLGLGMSISYAALL). Topologically, residues 672 to 699 (TKTNRIYRIFEQGKRSVSAPRFISPASQ) are cytoplasmic. Residues 700 to 720 (LAITFSLISLQLLGICVWFVV) traverse the membrane as a helical segment. Residues 721–751 (DPSHSVVDFQDQRTLDPRFARGVLKCDISDL) lie on the Extracellular side of the membrane. Residues 752 to 772 (SLICLLGYSMLLMVTCTVYAI) form a helical membrane-spanning segment. Residues 773-786 (KTRGVPETFNEAKP) are Cytoplasmic-facing. The helical transmembrane segment at 787 to 807 (IGFTMYTTCIVWLAFIPIFFG) threads the bilayer. Topologically, residues 808-826 (TSQSADKLYIQTTTLTVSV) are extracellular. The helical transmembrane segment at 827–847 (SLSASVSLGMLYMPKVYIILF) threads the bilayer. Residues 848–912 (HPEQNVPKRK…TYVTYTNHAI (65 aa)) are Cytoplasmic-facing.

This sequence belongs to the G-protein coupled receptor 3 family. Interacts with PICK1.

Its subcellular location is the cell membrane. Its function is as follows. G-protein coupled receptor for glutamate. Ligand binding causes a conformation change that triggers signaling via guanine nucleotide-binding proteins (G proteins) and modulates the activity of down-stream effectors. Signaling inhibits adenylate cyclase activity. This is Metabotropic glutamate receptor 4 (GRM4) from Macaca fascicularis (Crab-eating macaque).